A 130-amino-acid polypeptide reads, in one-letter code: Small ribosomal subunit protein uS11 (130 aa).

The protein belongs to the universal ribosomal protein uS11 family. In terms of assembly, part of the 30S ribosomal subunit. Interacts with proteins S7 and S18. Binds to IF-3.

Its function is as follows. Located on the platform of the 30S subunit, it bridges several disparate RNA helices of the 16S rRNA. Forms part of the Shine-Dalgarno cleft in the 70S ribosome. The sequence is that of Small ribosomal subunit protein uS11 from Pseudoalteromonas atlantica (strain T6c / ATCC BAA-1087).